A 1017-amino-acid chain; its full sequence is Sodium/potassium-transporting ATPase subunit alpha-2 (1017 aa).

A disordered region spans residues 1–31 (MDGREYSPAATTSENGGGRRKQKEKELDELK). The Cytoplasmic portion of the chain corresponds to 1–82 (MDGREYSPAA…NALTPPPTTP (82 aa)). The interval 77-79 (PPP) is interaction with phosphoinositide-3 kinase. The helical transmembrane segment at 83–103 (EWVKFCRQLFGGFSILLWIGA) threads the bilayer. Residues 104–126 (ILCFLAYGIQAAMEDEPSNDNLY) lie on the Extracellular side of the membrane. Residues 127 to 147 (LGVVLAAVVIVTGCFSYYQEA) form a helical membrane-spanning segment. At 148 to 283 (KSSKIMDSFK…VGRTPIAMEI (136 aa)) the chain is on the cytoplasmic side. Residues 207–228 (KVDNSSLTGESEPQTRSPEFTH) are disordered. The span at 209–224 (DNSSLTGESEPQTRSP) shows a compositional bias: polar residues. A helical transmembrane segment spans residues 284–303 (EHFIRLITGVAVFLGLSFFI). The Extracellular portion of the chain corresponds to 304–315 (LSLILGYTWLEA). Residues 316–333 (VIFLIGIIVANVPEGLLA) form a helical membrane-spanning segment. At 334 to 766 (TVTVCLTLTA…EEGRLIFDNL (433 aa)) the chain is on the cytoplasmic side. Aspartate 371 acts as the 4-aspartylphosphate intermediate in catalysis. Lysine 502 is an ATP binding site. Mg(2+) is bound by residues aspartate 711 and aspartate 715. Residues 767-786 (KKSIAYTLTSNIPEITPFLL) form a helical membrane-spanning segment. The Extracellular portion of the chain corresponds to 787-796 (FIIANIPLPL). The chain crosses the membrane as a helical span at residues 797-817 (GTVTILCIDLGTDMVPAISLA). Residues 818–837 (YEAAESDIMKRQPRNPRTDK) lie on the Cytoplasmic side of the membrane. The helical transmembrane segment at 838–860 (LVNERLISMAYGQIGMIQALGGF) threads the bilayer. Residues 861 to 912 (FTYFVILAENGFLPARLLGVRLAWDDRSTNDLEDSYGQEWTYEQRKVVEFTC) lie on the Extracellular side of the membrane. The chain crosses the membrane as a helical span at residues 913-932 (HTAFFASIVVVQWADLIICK). At 933-945 (TRRNSVFQQGMKN) the chain is on the cytoplasmic side. The residue at position 937 (serine 937) is a Phosphoserine; by PKA. Residues 946–964 (KILIFGLLEETALAAFLSY) form a helical membrane-spanning segment. The Extracellular segment spans residues 965–979 (CPGMGVALRMYPLKV). The chain crosses the membrane as a helical span at residues 980–1000 (TWWFCAFPYSLLIFAYDEVRK). Topologically, residues 1001–1017 (LILRRYPGGWVEKETYY) are cytoplasmic.

Belongs to the cation transport ATPase (P-type) (TC 3.A.3) family. Type IIC subfamily. The sodium/potassium-transporting ATPase is composed of a catalytic alpha subunit, an auxiliary non-catalytic beta subunit and an additional regulatory subunit.

It is found in the membrane. Its subcellular location is the cell membrane. It catalyses the reaction K(+)(out) + Na(+)(in) + ATP + H2O = K(+)(in) + Na(+)(out) + ADP + phosphate + H(+). Functionally, this is the catalytic component of the active enzyme, which catalyzes the hydrolysis of ATP coupled with the exchange of sodium and potassium ions across the plasma membrane. This action creates the electrochemical gradient of sodium and potassium ions, providing the energy for active transport of various nutrients. The sequence is that of Sodium/potassium-transporting ATPase subunit alpha-2 (ATP1A2) from Gallus gallus (Chicken).